The primary structure comprises 249 residues: tRNA pseudouridine synthase A (249 aa).

Asp-53 (nucleophile) is an active-site residue. Tyr-111 serves as a coordination point for substrate.

It belongs to the tRNA pseudouridine synthase TruA family. As to quaternary structure, homodimer.

It carries out the reaction uridine(38/39/40) in tRNA = pseudouridine(38/39/40) in tRNA. Formation of pseudouridine at positions 38, 39 and 40 in the anticodon stem and loop of transfer RNAs. The protein is tRNA pseudouridine synthase A of Streptococcus suis (strain 98HAH33).